A 307-amino-acid polypeptide reads, in one-letter code: Fructokinase (307 aa).

Belongs to the carbohydrate kinase PfkB family.

The catalysed reaction is D-fructose + ATP = D-fructose 6-phosphate + ADP + H(+). This is Fructokinase (cscK) from Escherichia coli.